The primary structure comprises 163 residues: Nucleotide-binding protein SACE_6882 (163 aa).

Belongs to the YajQ family.

In terms of biological role, nucleotide-binding protein. The protein is Nucleotide-binding protein SACE_6882 of Saccharopolyspora erythraea (strain ATCC 11635 / DSM 40517 / JCM 4748 / NBRC 13426 / NCIMB 8594 / NRRL 2338).